Consider the following 306-residue polypeptide: Voltage-dependent anion channel-forming protein RSc3414 (306 aa).

Helical transmembrane passes span Leu28–Ile48, Val50–Phe70, Tyr213–Val233, and Phe239–Ala259.

Belongs to the anion channel-forming bestrophin (TC 1.A.46) family.

The protein localises to the cell membrane. The protein is Voltage-dependent anion channel-forming protein RSc3414 of Ralstonia nicotianae (strain ATCC BAA-1114 / GMI1000) (Ralstonia solanacearum).